Consider the following 518-residue polypeptide: MMSFLPYFSAETWTLLALLITLIVVYGYWPYGVFTKMGIPGPKPLPYFGTMLEYKKGFTNFDTECFQKYGRIWGIYDGRQPVLCIMDKSMIKTVLIKECYNIFTNRRNFHLNGELFDALSVAEDDTWRRIRSVLSPSFTSGRLKEMFGIMKQHSSTLLSGMKKQADKDQTIEVKEFFGPYSMDVVTSTAFSVDIDSLNNPSDPFVSNVKKMLKFDLFNPLFLLVALFPFTGPILEKMKFSFFPTAVTDFFYASLAKIKSGRDTGNSTNRVDFLQLMIDSQKGSDTKTGEEQTKGLTDHEILSQAMIFIFAGYETSSSTMSFLAYNLATNHHVMTKLQEEIDTVFPNKAPIQYEALMQMDYLDCVLNESLRLYPIAPRLERVAKKTVEINGIVIPKDCIVLVPTWTLHRDPEIWSDPEEFKPERFSKENKESIDPYTYMPFGAGPRNCIGMRFALIMIKLAMVEILQSFTFSVCDETEIPLEMDNQGLLMPKRPIKLRLEARRNTPSNTTATTLKSPTT.

Cysteine 447 serves as a coordination point for heme.

The protein belongs to the cytochrome P450 family. Requires heme as cofactor.

It is found in the endoplasmic reticulum membrane. The protein localises to the microsome membrane. The catalysed reaction is an organic molecule + reduced [NADPH--hemoprotein reductase] + O2 = an alcohol + oxidized [NADPH--hemoprotein reductase] + H2O + H(+). Cytochromes P450 are a group of heme-thiolate monooxygenases. In liver microsomes, this enzyme is involved in an NADPH-dependent electron transport pathway. It oxidizes a variety of structurally unrelated compounds, including steroids, fatty acids, and xenobiotics. The chain is Cytochrome P450 3A27 (cyp3a27) from Oncorhynchus mykiss (Rainbow trout).